A 57-amino-acid polypeptide reads, in one-letter code: UPF0391 membrane protein Nwi_2359 (57 aa).

2 helical membrane passes run 4–24 (WVVT…GGIA) and 30–50 (IAKI…VVGF).

The protein belongs to the UPF0391 family.

It is found in the cell membrane. The protein is UPF0391 membrane protein Nwi_2359 of Nitrobacter winogradskyi (strain ATCC 25391 / DSM 10237 / CIP 104748 / NCIMB 11846 / Nb-255).